Here is a 177-residue protein sequence, read N- to C-terminus: MSAKLNWYRITFNDTVWRFDTARGPKDGETCPLIASELFSSGLSEVFKSVTSFSEILRNMESRGYITNITLRADSDILGPGALRCEFLFPSEVFIPTSHTLKMGRSSLILEPHLVVLKECKYISSGKLDIGISSIEATSVAVLRRVKGPAFIGCMDDNPFGVLTKKPSDEKNVLASK.

Homomultimer. Interacts with nucleoprotein and with the cytoplasmic domain of glycoprotein.

The protein localises to the virion membrane. Its subcellular location is the host endomembrane system. Its function is as follows. Plays a major role in assembly and budding of virion. Completely covers the ribonucleoprotein coil and keep it in condensed bullet-shaped form. Inhibits viral transcription and stimulates replication. The chain is Matrix protein (M) from Lettuce necrotic yellows virus (isolate 318) (LNYV).